A 2641-amino-acid chain; its full sequence is Prosolanapyrone synthase (2641 aa).

One can recognise a Ketosynthase family 3 (KS3) domain in the interval 14–440 (PEPIAIVGMG…GANGHCIIDD (427 aa)). Residues cysteine 187, histidine 323, and histidine 363 each act as for beta-ketoacyl synthase activity in the active site. The disordered stretch occupies residues 456 to 515 (SIGHINGHTNGHTNGHTNGHTNGHTNGHTNGHTNGAHASDGHNGHHQNGMNGNSASHMSE). A compositionally biased stretch (low complexity) spans 461 to 490 (NGHTNGHTNGHTNGHTNGHTNGHTNGHTNG). A malonyl-CoA:ACP transacylase (MAT) region spans residues 619-920 (FVFTGQGAQW…KGPVGQISRS (302 aa)). The interval 1011–1149 (HDLLGSKLPG…GRVRVIAGTS (139 aa)) is N-terminal hotdog fold. The segment at 1011-1309 (HDLLGSKLPG…GNLRCVTYTE (299 aa)) is dehydratase (DH) domain. Positions 1011 to 1313 (HDLLGSKLPG…CVTYTEVLPS (303 aa)) constitute a PKS/mFAS DH domain. Histidine 1043 acts as the Proton acceptor; for dehydratase activity in catalysis. Residues 1161 to 1313 (ARTLDTKAWY…CVTYTEVLPS (153 aa)) form a C-terminal hotdog fold region. The Proton donor; for dehydratase activity role is filled by aspartate 1227. Residues 1477–1665 (TGAYPQLVRF…GAELVLDDYP (189 aa)) are methyltransferase (MT) domain. Residues 1894–2206 (GLLTSLYFKP…KGTHVGKLVV (313 aa)) are enoyl reductase (ER) domain. Residues 2231–2408 (NYLITGGLGG…STVSFGLIRD (178 aa)) are ketoreductase (KR) domain. A Carrier domain is found at 2561 to 2639 (RTVALVTDAI…ILANKIVDGA (79 aa)). Position 2598 is an O-(pantetheine 4'-phosphoryl)serine (serine 2598).

It participates in phytotoxin biosynthesis. In terms of biological role, prosolanapyrone synthase; part of the gene cluster that mediates the biosynthesis of the phytotoxin solanapyrone, a causal agent of early blight disease of potato and tomato. The prosolanapyrone synthase sol1 is a polyketide synthase that produces the octaketide desmethylprosolanapyrone I via sequential condensations of 7 malonyl-CoA units with one acetyl-CoA unit, and one methylation step. The octaketide backbone is further methylated by the sol2 O-methyltransferase to yield prosolanapyrone I. Prosolanapyrone I is hydroxylated to prosolanapyrone II by the cytochrome P450 monooxygenase sol6. The solanapyrone synthase sol5 then catalyzes the oxidation of prosolanapyrone II and the subsequent Diels Alder cycloisomerization of the product prosolanapyrone III to solanapyrones A and D. Solanapyrones A and D are then converted into solanapyrones B and E, respectively, by the sol3 dehydrogenase. In Alternaria solani, this protein is Prosolanapyrone synthase (sol1).